The following is an 855-amino-acid chain: Discoidin domain-containing receptor 2 (855 aa).

The first 21 residues, 1 to 21 (MILIPRMLLVLFLLLPILSSA), serve as a signal peptide directing secretion. Residues 22 to 399 (KAQVNPAICR…MLKVDDSNTR (378 aa)) are Extracellular-facing. An F5/8 type C domain is found at 30-185 (CRYPLGMSGG…VCMRVELYGC (156 aa)). 2 cysteine pairs are disulfide-bonded: Cys-30/Cys-185 and Cys-73/Cys-177. Asn-121, Asn-213, Asn-261, Asn-280, and Asn-372 each carry an N-linked (GlcNAc...) asparagine glycan. Residues 400 to 421 (ILIGCLVAIIFILLAIIVIILW) form a helical membrane-spanning segment. Residues 422 to 855 (RQFWQKMLEK…HLLLLQQGDE (434 aa)) are Cytoplasmic-facing. The segment at 452-471 (SMFNNNRSSSPSEQGSNSTY) is disordered. Tyr-471 carries the post-translational modification Phosphotyrosine; by SRC and autocatalysis. In terms of domain architecture, Protein kinase spans 563-849 (LTFKEKLGEG…PSFQEIHLLL (287 aa)). ATP-binding positions include 569–577 (LGEGQFGEV) and Lys-608. The active-site Proton acceptor is the Asp-710. Residues Tyr-736, Tyr-740, and Tyr-741 each carry the phosphotyrosine; by SRC and autocatalysis modification.

The protein belongs to the protein kinase superfamily. Tyr protein kinase family. Insulin receptor subfamily. In terms of assembly, binds hydroxyproline-rich sequence motifs in fibrillar, glycosylated collagen, such as the GQOGVMGFO motif, where O stands for hydroxyproline. Interacts with SRC. Interacts (tyrosine phosphorylated) with SHC1. Post-translationally, N-glycosylated. In terms of processing, tyrosine phosphorylated in response to collagen binding. Phosphorylated by SRC; this is required for activation and subsequent autophosphorylation on additional tyrosine residues. In terms of tissue distribution, detected in osteocytes, osteoblastic cells in subchondral bone, bone lining cells, tibia and cartilage (at protein level). Detected at high levels in heart and lung, and at low levels in brain, placenta, liver, skeletal muscle, pancreas, and kidney.

Its subcellular location is the cell membrane. It carries out the reaction L-tyrosyl-[protein] + ATP = O-phospho-L-tyrosyl-[protein] + ADP + H(+). Its activity is regulated as follows. Present in an inactive state in the absence of collagen binding and phosphorylation by SRC. Tyrosine phosphorylation enhances the affinity for ATP and the catalytic activity. Its function is as follows. Tyrosine kinase involved in the regulation of tissues remodeling. It functions as a cell surface receptor for fibrillar collagen and regulates cell differentiation, remodeling of the extracellular matrix, cell migration and cell proliferation. Required for normal bone development. Regulates osteoblast differentiation and chondrocyte maturation via a signaling pathway that involves MAP kinases and leads to the activation of the transcription factor RUNX2. Regulates remodeling of the extracellular matrix by up-regulation of the collagenases MMP1, MMP2 and MMP13, and thereby facilitates cell migration and tumor cell invasion. Promotes fibroblast migration and proliferation, and thereby contributes to cutaneous wound healing. This Homo sapiens (Human) protein is Discoidin domain-containing receptor 2 (DDR2).